The primary structure comprises 530 residues: Copine-B (530 aa).

2 C2 domains span residues 1–125 (MTTP…SEIK) and 130–253 (ETGV…PLIN). 5 residues coordinate Ca(2+): aspartate 25, aspartate 31, aspartate 85, aspartate 87, and aspartate 100. Residues 294-513 (NLMVAIDCTA…ETLREIPQQL (220 aa)) enclose the VWFA domain.

Belongs to the copine family. Requires Ca(2+) as cofactor.

The protein is Copine-B (cpnB-1) of Dictyostelium discoideum (Social amoeba).